The following is a 160-amino-acid chain: UPF0262 protein BCAN_A0255 (160 aa).

The protein belongs to the UPF0262 family.

The sequence is that of UPF0262 protein BCAN_A0255 from Brucella canis (strain ATCC 23365 / NCTC 10854 / RM-666).